The chain runs to 104 residues: Thioredoxin 1 (104 aa).

Residues 2-104 (VKIVTSQAEF…LKQLIEKYAA (103 aa)) enclose the Thioredoxin domain. Catalysis depends on nucleophile residues cysteine 30 and cysteine 33. Cysteine 30 and cysteine 33 are disulfide-bonded.

This sequence belongs to the thioredoxin family. The disulfide bond between Cys-30 and Cys-33 acts as a redox-active center and is reduced by thioredoxin reductase TRXR.

The protein resides in the cytoplasm. Participates in various redox reactions through the reversible oxidation of its active center dithiol to a disulfide and catalyzes dithiol-disulfide exchange reactions. By modifying the redox status of targeted proteins, induces changes in their structure and activity. Reduces oxidized glutathione (GSSG), thereby acting as a backup for the glutathione redox system. Reduces nitroglutathione (GSNO), a compound involved in the transport of nitric oxide (NO). Also reduces oxidative stress by detoxifying hydrogen peroxide, tert-butyl hydroperoxide and cumene hydroperoxide. Activates ornithine aminotransferase OAT by reducing a disulfide bond in the substrate binding loop, thereby enhancing the affinity of OAT for its substrates. May reduce S-adenosyl-L-homocysteine hydrolase SAHH. The chain is Thioredoxin 1 from Plasmodium falciparum (isolate 3D7).